The following is a 269-amino-acid chain: GTP cyclohydrolase FolE2 (269 aa).

The protein belongs to the GTP cyclohydrolase IV family.

The enzyme catalyses GTP + H2O = 7,8-dihydroneopterin 3'-triphosphate + formate + H(+). It functions in the pathway cofactor biosynthesis; 7,8-dihydroneopterin triphosphate biosynthesis; 7,8-dihydroneopterin triphosphate from GTP: step 1/1. In terms of biological role, converts GTP to 7,8-dihydroneopterin triphosphate. The polypeptide is GTP cyclohydrolase FolE2 (Thiobacillus denitrificans (strain ATCC 25259 / T1)).